A 635-amino-acid polypeptide reads, in one-letter code: tRNA uridine 5-carboxymethylaminomethyl modification enzyme MnmG (635 aa).

FAD is bound at residue 15-20 (GAGHAG). NAD(+) is bound at residue 276–290 (GPRYCPSIEDKIVRF).

The protein belongs to the MnmG family. As to quaternary structure, homodimer. Heterotetramer of two MnmE and two MnmG subunits. FAD serves as cofactor.

Its subcellular location is the cytoplasm. Functionally, NAD-binding protein involved in the addition of a carboxymethylaminomethyl (cmnm) group at the wobble position (U34) of certain tRNAs, forming tRNA-cmnm(5)s(2)U34. This chain is tRNA uridine 5-carboxymethylaminomethyl modification enzyme MnmG, found in Streptococcus sanguinis (strain SK36).